The primary structure comprises 122 residues: Holo-[acyl-carrier-protein] synthase (122 aa).

Residues D8 and E58 each contribute to the Mg(2+) site.

It belongs to the P-Pant transferase superfamily. AcpS family. It depends on Mg(2+) as a cofactor.

The protein localises to the cytoplasm. It carries out the reaction apo-[ACP] + CoA = holo-[ACP] + adenosine 3',5'-bisphosphate + H(+). Transfers the 4'-phosphopantetheine moiety from coenzyme A to a Ser of acyl-carrier-protein. The polypeptide is Holo-[acyl-carrier-protein] synthase (Levilactobacillus brevis (strain ATCC 367 / BCRC 12310 / CIP 105137 / JCM 1170 / LMG 11437 / NCIMB 947 / NCTC 947) (Lactobacillus brevis)).